The chain runs to 185 residues: Ribosome-recycling factor (185 aa).

The protein belongs to the RRF family.

Its subcellular location is the cytoplasm. In terms of biological role, responsible for the release of ribosomes from messenger RNA at the termination of protein biosynthesis. May increase the efficiency of translation by recycling ribosomes from one round of translation to another. This is Ribosome-recycling factor from Ehrlichia ruminantium (strain Gardel).